Reading from the N-terminus, the 95-residue chain is Alpha-bungarotoxin isoform V31 (95 aa).

Positions 1–21 (MKTLLLTLVVVTIVCLDLGYT) are cleaved as a signal peptide. 5 disulfides stabilise this stretch: Cys-24–Cys-44, Cys-37–Cys-65, Cys-50–Cys-54, Cys-69–Cys-80, and Cys-81–Cys-86.

The protein belongs to the three-finger toxin family. Long-chain subfamily. Type II alpha-neurotoxin sub-subfamily. As to quaternary structure, monomer in solution, homodimer in crystal state. Expressed by the venom gland.

It is found in the secreted. Binds with high affinity to muscular (alpha-1/CHRNA1) and neuronal (alpha-7/CHRNA7) nicotinic acetylcholine receptor (nAChR) and inhibits acetylcholine from binding to the receptor, thereby impairing neuromuscular and neuronal transmission. The protein is Alpha-bungarotoxin isoform V31 of Bungarus multicinctus (Many-banded krait).